The primary structure comprises 523 residues: Katanin p60 ATPase-containing subunit A1 (523 aa).

The segment at Lys82–Glu215 is disordered. The segment covering Ala178 to Ser194 has biased composition (low complexity). Gly279–Thr286 lines the ATP pocket.

Belongs to the AAA ATPase family. Katanin p60 subunit A1 subfamily. As to quaternary structure, may homooligomerize. Component of KTN80-KTN1 complexes composed of a hexamer of KTN1-KTN80 heterodimers that sense microtubule (MT) geometry to confer precise MT severing. Interacts directly with KTN80.1, KTN80.2, KTN80.3 and KTN80.4. Can interact with KTN80.1. May interact with the kinesin related protein KIN14A. Interacts with microtubule polymers. Binds to IPGA1. As to expression, expressed ubiquitously, including siliques, flowers, leaves, stems and roots.

The protein resides in the cytoplasm. Its subcellular location is the cytoskeleton. The catalysed reaction is n ATP + n H2O + a microtubule = n ADP + n phosphate + (n+1) alpha/beta tubulin heterodimers.. Severs microtubules in vitro in an ATP-dependent manner. Required for oligomerization of functional KTN80-KTN1 complexes that catalyze microtubule severing. This activity may promote rapid reorganization of cellular microtubule arrays. May be required for reorientation of cortical microtubule arrays during cellular elongation. Failure to correctly orient these arrays drastically compromises fiber length, cell wall thickness and mechanical strength. May also be required for the spatial organization of developmental cues within the root. Involved in the IPGA1- and AN-dependent regulation of pavement cells morphogenesis leading to puzzle shape. In Arabidopsis thaliana (Mouse-ear cress), this protein is Katanin p60 ATPase-containing subunit A1.